Consider the following 144-residue polypeptide: Maximins 7/H13 (144 aa).

An N-terminal signal peptide occupies residues 1 to 18 (MNFKYIVAVSFLIASAYA). The propeptide occupies 19 to 43 (RSEENDEQSLSQRDVLEEESLREIR). Asparagine 70 is subject to Asparagine amide. A propeptide spanning residues 74 to 123 (TAEDHEVMKRLEAVMRDLDSLDYPEEAAERETRGFNQEEIANLFTKKEKR) is cleaved from the precursor. Leucine 143 is modified (leucine amide).

The protein belongs to the bombinin family. In terms of tissue distribution, expressed by the skin glands.

It is found in the secreted. Functionally, maximin-7 shows antimicrobial activity against bacteria and against the fungus C.albicans. It has little hemolytic activity. Its function is as follows. Maximin-H13 shows antimicrobial activity against bacteria and against the fungus C.albicans. Shows strong hemolytic activity. This is Maximins 7/H13 from Bombina maxima (Giant fire-bellied toad).